The chain runs to 300 residues: tRNA dimethylallyltransferase (300 aa).

11–18 is an ATP binding site; the sequence is GPTAVGKS. 13-18 serves as a coordination point for substrate; the sequence is TAVGKS. Residues 35–38 are interaction with substrate tRNA; sequence DSIQ.

The protein belongs to the IPP transferase family. As to quaternary structure, monomer. Mg(2+) is required as a cofactor.

The catalysed reaction is adenosine(37) in tRNA + dimethylallyl diphosphate = N(6)-dimethylallyladenosine(37) in tRNA + diphosphate. Its function is as follows. Catalyzes the transfer of a dimethylallyl group onto the adenine at position 37 in tRNAs that read codons beginning with uridine, leading to the formation of N6-(dimethylallyl)adenosine (i(6)A). In Borrelia duttonii (strain Ly), this protein is tRNA dimethylallyltransferase.